A 692-amino-acid chain; its full sequence is Elongation factor G (692 aa).

The region spanning 8–283 is the tr-type G domain; the sequence is EDYRNFGIMA…AVVDYLPSPL (276 aa). Residues 17-24, 81-85, and 135-138 each bind GTP; these read AHIDAGKT, DTPGH, and NKMD.

The protein belongs to the TRAFAC class translation factor GTPase superfamily. Classic translation factor GTPase family. EF-G/EF-2 subfamily.

It is found in the cytoplasm. Functionally, catalyzes the GTP-dependent ribosomal translocation step during translation elongation. During this step, the ribosome changes from the pre-translocational (PRE) to the post-translocational (POST) state as the newly formed A-site-bound peptidyl-tRNA and P-site-bound deacylated tRNA move to the P and E sites, respectively. Catalyzes the coordinated movement of the two tRNA molecules, the mRNA and conformational changes in the ribosome. In Caulobacter sp. (strain K31), this protein is Elongation factor G.